The sequence spans 557 residues: Beta-amylase 2, chloroplastic (557 aa).

A chloroplast-targeting transit peptide spans 1–38 (MMSLNLAHQTGAAAAVAPAAPRTAVVAAAAGTVSAPAV). 3 residues coordinate substrate: aspartate 135, histidine 175, and aspartate 183. Glutamate 267 (proton donor) is an active-site residue. Residues lysine 380, histidine 385, and threonine 427 each contribute to the substrate site. Residue glutamate 465 is the Proton acceptor of the active site. Substrate-binding positions include 466–467 (NA) and arginine 499.

Belongs to the glycosyl hydrolase 14 family.

It localises to the plastid. The protein localises to the chloroplast. It carries out the reaction Hydrolysis of (1-&gt;4)-alpha-D-glucosidic linkages in polysaccharides so as to remove successive maltose units from the non-reducing ends of the chains.. In terms of biological role, possesses beta-amylase activity in vitro. May be involved in cold resistance by mediating the accumulation of maltose upon freezing stress, thus contributing to the protection of membranes. This is Beta-amylase 2, chloroplastic from Oryza sativa subsp. japonica (Rice).